The following is a 130-amino-acid chain: Small ribosomal subunit protein uS8 (130 aa).

Belongs to the universal ribosomal protein uS8 family. In terms of assembly, part of the 30S ribosomal subunit. Contacts proteins S5 and S12.

Its function is as follows. One of the primary rRNA binding proteins, it binds directly to 16S rRNA central domain where it helps coordinate assembly of the platform of the 30S subunit. The protein is Small ribosomal subunit protein uS8 of Buchnera aphidicola subsp. Acyrthosiphon kondoi (Acyrthosiphon kondoi symbiotic bacterium).